We begin with the raw amino-acid sequence, 440 residues long: Proline--tRNA ligase (440 aa).

This sequence belongs to the class-II aminoacyl-tRNA synthetase family. ProS type 2 subfamily. In terms of assembly, homodimer.

It localises to the cytoplasm. It carries out the reaction tRNA(Pro) + L-proline + ATP = L-prolyl-tRNA(Pro) + AMP + diphosphate. In terms of biological role, catalyzes the attachment of proline to tRNA(Pro) in a two-step reaction: proline is first activated by ATP to form Pro-AMP and then transferred to the acceptor end of tRNA(Pro). In Methylocella silvestris (strain DSM 15510 / CIP 108128 / LMG 27833 / NCIMB 13906 / BL2), this protein is Proline--tRNA ligase.